Here is a 280-residue protein sequence, read N- to C-terminus: Large ribosomal subunit protein uL2 (280 aa).

Disordered stretches follow at residues 1 to 58 (MAIR…GGGH) and 226 to 280 (MNPV…KHGR). 2 stretches are compositionally biased toward basic residues: residues 37–58 (LHGH…GGGH) and 268–280 (IVRR…KHGR).

The protein belongs to the universal ribosomal protein uL2 family. Part of the 50S ribosomal subunit. Forms a bridge to the 30S subunit in the 70S ribosome.

One of the primary rRNA binding proteins. Required for association of the 30S and 50S subunits to form the 70S ribosome, for tRNA binding and peptide bond formation. It has been suggested to have peptidyltransferase activity; this is somewhat controversial. Makes several contacts with the 16S rRNA in the 70S ribosome. The chain is Large ribosomal subunit protein uL2 from Mycobacterium avium (strain 104).